Consider the following 673-residue polypeptide: DNA ligase (673 aa).

Residues 33-37 (DYEYD), 82-83 (SL), and Glu113 contribute to the NAD(+) site. Lys115 (N6-AMP-lysine intermediate) is an active-site residue. Positions 136, 170, 285, and 309 each coordinate NAD(+). Cys403, Cys406, Cys421, and Cys426 together coordinate Zn(2+). The BRCT domain maps to 583–672 (AKSDILKGYT…SHEEVEKILM (90 aa)).

The protein belongs to the NAD-dependent DNA ligase family. LigA subfamily. Requires Mg(2+) as cofactor. Mn(2+) serves as cofactor.

It catalyses the reaction NAD(+) + (deoxyribonucleotide)n-3'-hydroxyl + 5'-phospho-(deoxyribonucleotide)m = (deoxyribonucleotide)n+m + AMP + beta-nicotinamide D-nucleotide.. Functionally, DNA ligase that catalyzes the formation of phosphodiester linkages between 5'-phosphoryl and 3'-hydroxyl groups in double-stranded DNA using NAD as a coenzyme and as the energy source for the reaction. It is essential for DNA replication and repair of damaged DNA. This is DNA ligase from Caldicellulosiruptor saccharolyticus (strain ATCC 43494 / DSM 8903 / Tp8T 6331).